The following is a 292-amino-acid chain: 4-hydroxy-tetrahydrodipicolinate synthase (292 aa).

A pyruvate-binding site is contributed by T44. Y132 serves as the catalytic Proton donor/acceptor. K161 acts as the Schiff-base intermediate with substrate in catalysis. Position 203 (I203) interacts with pyruvate.

This sequence belongs to the DapA family. In terms of assembly, homotetramer.

It is found in the cytoplasm. The catalysed reaction is L-aspartate 4-semialdehyde + pyruvate = (2S,4S)-4-hydroxy-2,3,4,5-tetrahydrodipicolinate + H2O + H(+). It participates in amino-acid biosynthesis; L-lysine biosynthesis via DAP pathway; (S)-tetrahydrodipicolinate from L-aspartate: step 3/4. With respect to regulation, is feedback inhibited by lysine. Is competitively inhibited by 2-oxobutyrate with respect to pyruvate. In terms of biological role, catalyzes the condensation of (S)-aspartate-beta-semialdehyde [(S)-ASA] and pyruvate to 4-hydroxy-tetrahydrodipicolinate (HTPA). This is 4-hydroxy-tetrahydrodipicolinate synthase from Rhizobium meliloti (Ensifer meliloti).